The sequence spans 865 residues: Protein translocase subunit SecA (865 aa).

ATP contacts are provided by residues Gln85, 103–107, and Asp505; that span reads GEGKT. Residues Cys847, Cys849, Cys858, and His859 each contribute to the Zn(2+) site.

This sequence belongs to the SecA family. Monomer and homodimer. Part of the essential Sec protein translocation apparatus which comprises SecA, SecYEG and auxiliary proteins SecDF. Other proteins may also be involved. Zn(2+) serves as cofactor.

The protein resides in the cell membrane. Its subcellular location is the cytoplasm. It catalyses the reaction ATP + H2O + cellular proteinSide 1 = ADP + phosphate + cellular proteinSide 2.. In terms of biological role, part of the Sec protein translocase complex. Interacts with the SecYEG preprotein conducting channel. Has a central role in coupling the hydrolysis of ATP to the transfer of proteins into and across the cell membrane, serving as an ATP-driven molecular motor driving the stepwise translocation of polypeptide chains across the membrane. The sequence is that of Protein translocase subunit SecA from Lactococcus lactis subsp. lactis (strain IL1403) (Streptococcus lactis).